A 243-amino-acid chain; its full sequence is UPF0758 protein sll0766 (243 aa).

The MPN domain maps to 113-235 (VVDSPEAAAI…HQSLRQCTDL (123 aa)). Residues H184, H186, and D197 each coordinate Zn(2+). The JAMM motif signature appears at 184 to 197 (HNHPSGGLEPSPED).

The protein belongs to the UPF0758 family.

The sequence is that of UPF0758 protein sll0766 from Synechocystis sp. (strain ATCC 27184 / PCC 6803 / Kazusa).